The primary structure comprises 448 residues: Glutamyl-tRNA reductase (448 aa).

Residues 49 to 52 (TCNR), Ser109, 114 to 116 (ETQ), and Gln120 each bind substrate. Cys50 serves as the catalytic Nucleophile. An NADP(+)-binding site is contributed by 189 to 194 (GAGEMG).

The protein belongs to the glutamyl-tRNA reductase family. As to quaternary structure, homodimer.

It catalyses the reaction (S)-4-amino-5-oxopentanoate + tRNA(Glu) + NADP(+) = L-glutamyl-tRNA(Glu) + NADPH + H(+). Its pathway is porphyrin-containing compound metabolism; protoporphyrin-IX biosynthesis; 5-aminolevulinate from L-glutamyl-tRNA(Glu): step 1/2. Catalyzes the NADPH-dependent reduction of glutamyl-tRNA(Glu) to glutamate 1-semialdehyde (GSA). This Staphylococcus epidermidis (strain ATCC 12228 / FDA PCI 1200) protein is Glutamyl-tRNA reductase.